A 59-amino-acid polypeptide reads, in one-letter code: Embryonic testis differentiation protein homolog A (59 aa).

The segment covering 1-10 (MDKEVPKGSP) has biased composition (basic and acidic residues). A disordered region spans residues 1 to 25 (MDKEVPKGSPREPALNIKKSDKSFK).

This is Embryonic testis differentiation protein homolog A from Homo sapiens (Human).